The following is a 602-amino-acid chain: uncharacterized protein (602 aa).

One can recognise a Helicase ATP-binding domain in the interval 51 to 210; sequence QYLGTQPRDF…PFVSYQPDAD (160 aa). The segment covering 430–439 has biased composition (basic and acidic residues); it reads PHRESAHDPL. Disordered stretches follow at residues 430–452 and 518–538; these read PHRE…TERG and RAQL…ASVH. The span at 523 to 534 shows a compositional bias: polar residues; sequence KGATQPATSGAS.

The protein to M.leprae ML1624.

This is an uncharacterized protein from Mycobacterium tuberculosis (strain CDC 1551 / Oshkosh).